Consider the following 889-residue polypeptide: Disease resistance protein UNI (889 aa).

Residues 19-64 (NCLIGKSYIRTLEKNLRALQREMEDLRAIQHEVQNKVARDEARHQR) are a coiled coil. The disordered stretch occupies residues 131-152 (GNFDEVSQPPPRSEVEERPTQP). In terms of domain architecture, NB-ARC spans 137 to 440 (SQPPPRSEVE…CEGFIGEDQV (304 aa)). 179–186 (GMGGVGKT) lines the ATP pocket. 9 LRR repeats span residues 510-532 (WGAVRKMSLMDNDIEEITCESKC), 533-555 (SELTTLFLQSNKLKNLPGAFIRY), 557-580 (QKLVVLDLSYNRDFNKLPEQISGL), 581-603 (VSLQFLDLSNTSIEHMPIGLKEL), 604-625 (KKLTFLDLTYTDRLCSISGISR), 626-652 (LLSLRLLRLLGSKVHGDASVLKELQQL), 653-676 (QNLQELAITVSAELISLDQRLAKL), 698-721 (MENLSSLRVENSYFSEIKCRESET), and 825-848 (CPKLRKLPLNATSVSKVEEFEIHM).

It belongs to the disease resistance NB-LRR family. Interacts with RPT2A.

In terms of biological role, involved in disease resistance via the salicylic acid (SA) signaling pathway. Involved in shoot architecture development via the cytokinin signaling pathway. The chain is Disease resistance protein UNI from Arabidopsis thaliana (Mouse-ear cress).